The primary structure comprises 685 residues: Polyphosphate kinase (685 aa).

Residue asparagine 45 coordinates ATP. Mg(2+) is bound by residues arginine 375 and arginine 405. Histidine 435 acts as the Phosphohistidine intermediate in catalysis. 3 residues coordinate ATP: tyrosine 468, arginine 564, and histidine 592.

Belongs to the polyphosphate kinase 1 (PPK1) family. It depends on Mg(2+) as a cofactor. An intermediate of this reaction is the autophosphorylated ppk in which a phosphate is covalently linked to a histidine residue through a N-P bond.

The enzyme catalyses [phosphate](n) + ATP = [phosphate](n+1) + ADP. Its function is as follows. Catalyzes the reversible transfer of the terminal phosphate of ATP to form a long-chain polyphosphate (polyP). The chain is Polyphosphate kinase from Neisseria meningitidis serogroup B (strain ATCC BAA-335 / MC58).